The sequence spans 312 residues: Ribosomal RNA small subunit methyltransferase H (312 aa).

Residues 35–37, aspartate 55, phenylalanine 79, aspartate 100, and glutamine 107 contribute to the S-adenosyl-L-methionine site; that span reads GGH.

It belongs to the methyltransferase superfamily. RsmH family.

It localises to the cytoplasm. The catalysed reaction is cytidine(1402) in 16S rRNA + S-adenosyl-L-methionine = N(4)-methylcytidine(1402) in 16S rRNA + S-adenosyl-L-homocysteine + H(+). Its function is as follows. Specifically methylates the N4 position of cytidine in position 1402 (C1402) of 16S rRNA. The sequence is that of Ribosomal RNA small subunit methyltransferase H from Azoarcus sp. (strain BH72).